The following is a 224-amino-acid chain: MPGGLLLGDVAPNFEANTTVGRIRFHDFLGDSWGILFSHPRDFTPVCTTELGRAAKLAPEFAKRNVKLIALSIDSVEDHLAWSKDINAYNCEEPTEKLPFPIIDDRNRELAILLGMLDPAEKDEKGMPGTARVVFVFGPDKKLKLSILYPATTGRNFDEILRVVISLQLTAEKRVATPVDWKDGDSVMVLPTIPEEEAKKLFPKGVFTKELPSGRKYLRYTPQP.

Residues 5–169 enclose the Thioredoxin domain; it reads LLLGDVAPNF…ILRVVISLQL (165 aa). Positions 31–40 are required and sufficient for targeting to lysosomes and lamellar bodies; that stretch reads DSWGILFSHP. Threonine 44 is modified (phosphothreonine). Residue cysteine 47 is the Cysteine sulfenic acid (-SOH) intermediate; for peroxidase activity of the active site. Lysine 63 carries the N6-acetyllysine modification. A Phosphotyrosine modification is found at tyrosine 89. The active-site For phospholipase activity is the aspartate 140. The residue at position 177 (threonine 177) is a Phosphothreonine; by MAPK. Lysine 209 bears the N6-acetyllysine; alternate mark. Lysine 209 carries the post-translational modification N6-succinyllysine; alternate.

This sequence belongs to the peroxiredoxin family. Prx6 subfamily. As to quaternary structure, homodimer. Interacts with GSTP1; mediates PRDX6 glutathionylation and regeneration. Interacts with APEX1. Interacts with STH. May interact with FAM168B. May interact with HTR2A. Irreversibly inactivated by overoxidation of Cys-47 to sulfinic acid (Cys-SO(2)H) and sulfonic acid (Cys-SO(3)H) forms upon oxidative stress. Post-translationally, phosphorylation at Thr-177 by MAP kinases increases the phospholipase activity of the enzyme. The phosphorylated form exhibits a greater lysophosphatidylcholine acyltransferase activity compared to the non-phosphorylated form.

Its subcellular location is the cytoplasm. It is found in the lysosome. The catalysed reaction is a hydroperoxide + 2 glutathione = an alcohol + glutathione disulfide + H2O. It carries out the reaction a 1,2-diacyl-sn-glycero-3-phosphocholine + H2O = a 1-acyl-sn-glycero-3-phosphocholine + a fatty acid + H(+). It catalyses the reaction a 1-acyl-sn-glycero-3-phosphocholine + an acyl-CoA = a 1,2-diacyl-sn-glycero-3-phosphocholine + CoA. The enzyme catalyses 1-hexadecanoyl-sn-glycero-3-phosphocholine + hexadecanoyl-CoA = 1,2-dihexadecanoyl-sn-glycero-3-phosphocholine + CoA. The catalysed reaction is 1,2-dihexadecanoyl-sn-glycero-3-phosphocholine + H2O = 1-hexadecanoyl-sn-glycero-3-phosphocholine + hexadecanoate + H(+). Thiol-specific peroxidase that catalyzes the reduction of hydrogen peroxide and organic hydroperoxides to water and alcohols, respectively. Can reduce H(2)O(2) and short chain organic, fatty acid, and phospholipid hydroperoxides. Also has phospholipase activity, and can therefore either reduce the oxidized sn-2 fatty acyl group of phospholipids (peroxidase activity) or hydrolyze the sn-2 ester bond of phospholipids (phospholipase activity). These activities are dependent on binding to phospholipids at acidic pH and to oxidized phospholipds at cytosolic pH. Plays a role in cell protection against oxidative stress by detoxifying peroxides and in phospholipid homeostasis. Exhibits acyl-CoA-dependent lysophospholipid acyltransferase which mediates the conversion of lysophosphatidylcholine (1-acyl-sn-glycero-3-phosphocholine or LPC) into phosphatidylcholine (1,2-diacyl-sn-glycero-3-phosphocholine or PC). Shows a clear preference for LPC as the lysophospholipid and for palmitoyl CoA as the fatty acyl substrate. This is Peroxiredoxin-6 (PRDX6) from Pongo abelii (Sumatran orangutan).